Here is a 472-residue protein sequence, read N- to C-terminus: Cysteine--tRNA ligase (472 aa).

C27 provides a ligand contact to Zn(2+). The 'HIGH' region signature appears at 29-39 (PTVYNLIHIGN). Positions 214, 239, and 243 each coordinate Zn(2+). Residues 271–275 (KMSKS) carry the 'KMSKS' region motif. An ATP-binding site is contributed by K274.

The protein belongs to the class-I aminoacyl-tRNA synthetase family. As to quaternary structure, monomer. Zn(2+) serves as cofactor.

It localises to the cytoplasm. It catalyses the reaction tRNA(Cys) + L-cysteine + ATP = L-cysteinyl-tRNA(Cys) + AMP + diphosphate. This Lachnospira eligens (strain ATCC 27750 / DSM 3376 / VPI C15-48 / C15-B4) (Eubacterium eligens) protein is Cysteine--tRNA ligase.